Consider the following 746-residue polypeptide: Exostosin-1 (746 aa).

Residues 1–7 (MQAKKRY) are Cytoplasmic-facing. Residues 8 to 28 (FILLSAGSCLALLFYFGGVQF) form a helical; Signal-anchor for type II membrane protein membrane-spanning segment. Residues 29-746 (RASRSHSRRE…RKKYRDIERL (718 aa)) are Lumenal-facing. N-linked (GlcNAc...) asparagine glycosylation occurs at N89. 2 disulfide bridges follow: C98/C103 and C109/C152. A protein contacts are provided by L166 and Y203. UDP-binding residues include K267, K269, Y271, and R280. A disulfide bond links C298 and C312. Position 300 (H300) interacts with a protein. UDP is bound by residues Y319 and Y324. Residue N330 is glycosylated (N-linked (GlcNAc...) asparagine). 2 disulfide bridges follow: C334–C355 and C652–C704. UDP contacts are provided by R346 and E349.

The protein belongs to the glycosyltransferase 47 family. As to quaternary structure, part of the heparan sulfate polymerase, a dimeric complex composed of EXT1 and EXT2. Could also form homooligomeric complexes. Interacts with NDST1. Post-translationally, N-glycosylated.

It is found in the golgi apparatus membrane. It localises to the golgi apparatus. Its subcellular location is the cis-Golgi network membrane. The protein localises to the endoplasmic reticulum membrane. It catalyses the reaction 3-O-{alpha-D-GlcNAc-[(1-&gt;4)-beta-D-GlcA-(1-&gt;4)-alpha-D-GlcNAc](n)-(1-&gt;4)-beta-D-GlcA-(1-&gt;3)-beta-D-Gal-(1-&gt;3)-beta-D-Gal-(1-&gt;4)-beta-D-Xyl}-L-seryl-[protein] + UDP-alpha-D-glucuronate = 3-O-{[(1-&gt;4)-beta-D-GlcA-(1-&gt;4)-alpha-D-GlcNAc](n+1)-(1-&gt;4)-beta-D-GlcA-(1-&gt;3)-beta-D-Gal-(1-&gt;3)-beta-D-Gal-(1-&gt;4)-beta-D-Xyl}-L-seryl-[protein] + UDP + H(+). It functions in the pathway protein modification; protein glycosylation. In terms of biological role, glycosyltransferase forming with EXT2 the heterodimeric heparan sulfate polymerase which catalyzes the elongation of the heparan sulfate glycan backbone. Glycan backbone extension consists in the alternating transfer of (1-&gt;4)-beta-D-GlcA and (1-&gt;4)-alpha-D-GlcNAc residues from their respective UDP-sugar donors. Both EXT1 and EXT2 are required for the full activity of the polymerase since EXT1 bears the N-acetylglucosaminyl-proteoglycan 4-beta-glucuronosyltransferase activity within the complex while EXT2 carries the glucuronosyl-N-acetylglucosaminyl-proteoglycan 4-alpha-N-acetylglucosaminyltransferase activity. Heparan sulfate proteoglycans are ubiquitous components of the extracellular matrix and play an important role in tissue homeostasis and signaling. This Mus musculus (Mouse) protein is Exostosin-1.